Here is a 311-residue protein sequence, read N- to C-terminus: Ribosomal RNA small subunit methyltransferase H (311 aa).

S-adenosyl-L-methionine-binding positions include 39–41, Asp59, Phe81, Asp102, and His109; that span reads GGH.

It belongs to the methyltransferase superfamily. RsmH family.

It localises to the cytoplasm. The catalysed reaction is cytidine(1402) in 16S rRNA + S-adenosyl-L-methionine = N(4)-methylcytidine(1402) in 16S rRNA + S-adenosyl-L-homocysteine + H(+). Its function is as follows. Specifically methylates the N4 position of cytidine in position 1402 (C1402) of 16S rRNA. The chain is Ribosomal RNA small subunit methyltransferase H from Porphyromonas gingivalis (strain ATCC BAA-308 / W83).